The primary structure comprises 173 residues: Beta-defensin 129 (173 aa).

The N-terminal stretch at 1–19 (MKLLFPIFASLMLQYKVNT) is a signal peptide. Cystine bridges form between Cys27/Cys53, Cys34/Cys48, and Cys38/Cys54. The segment at 144-173 (STKSNIKESRDSATASPPPAPPPPNTLPTP) is disordered. Residues 159 to 173 (SPPPAPPPPNTLPTP) are compositionally biased toward pro residues.

The protein belongs to the beta-defensin family.

It localises to the secreted. Its function is as follows. Has antibacterial activity. This Hylobates lar (Lar gibbon) protein is Beta-defensin 129 (DEFB129).